The chain runs to 459 residues: Nuclear hormone receptor family member nhr-11 (459 aa).

Residues 2–81 (GPLCAVCESP…AGMRSELVRS (80 aa)) constitute a DNA-binding region (nuclear receptor). 2 NR C4-type zinc fingers span residues 5–26 (CAVC…CKAC) and 42–69 (CAAD…LRKC). Disordered regions lie at residues 90-119 (RRKD…EEMD) and 134-162 (DLPL…SSFD). Residues 97–115 (NSDAAPNSNSPSTRQSSSP) show a composition bias toward low complexity. Residues 188-458 (ENNSILQYYH…SMLHEMLNFQ (271 aa)) form the NR LBD domain.

The protein belongs to the nuclear hormone receptor family.

The protein localises to the nucleus. Orphan nuclear receptor. In Caenorhabditis elegans, this protein is Nuclear hormone receptor family member nhr-11 (nhr-11).